A 469-amino-acid chain; its full sequence is Glutamine synthetase (469 aa).

One can recognise a GS beta-grasp domain in the interval 13–97; it reads NEVKFVDLRF…IRCDILEPAT (85 aa). One can recognise a GS catalytic domain in the interval 105-469; that stretch reads PRSIAKRAEE…PLEFELYYSV (365 aa). The Mg(2+) site is built by glutamate 130 and glutamate 132. Residue glutamate 208 coordinates ATP. Mg(2+)-binding residues include glutamate 213 and glutamate 221. L-glutamate contacts are provided by residues 265 to 266 and glycine 266; that span reads NG. Histidine 270 lines the Mg(2+) pocket. ATP is bound by residues 272–274 and serine 274; that span reads HQS. Positions 322, 328, and 340 each coordinate L-glutamate. The ATP site is built by arginine 340, arginine 345, and lysine 353. Mg(2+) is bound at residue glutamate 358. Arginine 360 provides a ligand contact to L-glutamate. At tyrosine 398 the chain carries O-AMP-tyrosine.

Belongs to the glutamine synthetase family. In terms of assembly, oligomer of 12 subunits arranged in the form of two hexameric ring. The cofactor is Mg(2+).

Its subcellular location is the cytoplasm. The enzyme catalyses L-glutamate + NH4(+) + ATP = L-glutamine + ADP + phosphate + H(+). With respect to regulation, the activity of this enzyme could be controlled by adenylation under conditions of abundant glutamine. Catalyzes the ATP-dependent biosynthesis of glutamine from glutamate and ammonia. This is Glutamine synthetase (glnAv) from Vibrio cholerae serotype O1 (strain ATCC 39315 / El Tor Inaba N16961).